Consider the following 503-residue polypeptide: Probable cytosol aminopeptidase (503 aa).

Mn(2+)-binding residues include K268 and D273. K280 is a catalytic residue. The Mn(2+) site is built by D291, D350, and E352. R354 is a catalytic residue.

Belongs to the peptidase M17 family. The cofactor is Mn(2+).

The protein resides in the cytoplasm. It catalyses the reaction Release of an N-terminal amino acid, Xaa-|-Yaa-, in which Xaa is preferably Leu, but may be other amino acids including Pro although not Arg or Lys, and Yaa may be Pro. Amino acid amides and methyl esters are also readily hydrolyzed, but rates on arylamides are exceedingly low.. The enzyme catalyses Release of an N-terminal amino acid, preferentially leucine, but not glutamic or aspartic acids.. Presumably involved in the processing and regular turnover of intracellular proteins. Catalyzes the removal of unsubstituted N-terminal amino acids from various peptides. The sequence is that of Probable cytosol aminopeptidase from Herminiimonas arsenicoxydans.